A 476-amino-acid chain; its full sequence is Cysteine--tRNA ligase (476 aa).

Zn(2+) is bound at residue C28. A 'HIGH' region motif is present at residues 30–40 (PTVYDHTHLGH). Residues C208, H233, and E237 each coordinate Zn(2+). A 'KMSKS' region motif is present at residues 265 to 269 (KMSKS). K268 serves as a coordination point for ATP.

This sequence belongs to the class-I aminoacyl-tRNA synthetase family. Zn(2+) is required as a cofactor.

The protein resides in the cytoplasm. It carries out the reaction tRNA(Cys) + L-cysteine + ATP = L-cysteinyl-tRNA(Cys) + AMP + diphosphate. The chain is Cysteine--tRNA ligase from Methanococcus maripaludis (strain C6 / ATCC BAA-1332).